We begin with the raw amino-acid sequence, 763 residues long: Phosphoglycerol transferase I (763 aa).

Transmembrane regions (helical) follow at residues Met1–Ala21, Trp26–Phe46, Ile77–Ile97, and Phe108–Phe128.

Belongs to the OpgB family.

It is found in the cell inner membrane. It carries out the reaction a phosphatidylglycerol + a membrane-derived-oligosaccharide D-glucose = a 1,2-diacyl-sn-glycerol + a membrane-derived-oligosaccharide 6-(glycerophospho)-D-glucose.. The protein operates within glycan metabolism; osmoregulated periplasmic glucan (OPG) biosynthesis. Its function is as follows. Transfers a phosphoglycerol residue from phosphatidylglycerol to the membrane-bound nascent glucan backbones. The sequence is that of Phosphoglycerol transferase I from Escherichia coli (strain ATCC 8739 / DSM 1576 / NBRC 3972 / NCIMB 8545 / WDCM 00012 / Crooks).